Consider the following 333-residue polypeptide: MKIAVDAMGGDNAPQAIVEGVMLAKQDFPDIEFQLYGKEAEIKKYITDEKNITIIHTDEKIASDDEPVKAIRRKKTASMVLAAQAVKNGEADAIFSAGNTGALLAAGLFIVGRIKNVERPGLMSTLPVMGEPDKGFDMLDLGANADNKPEHLVQYAVLGSFYAEKVRNVQNPRVGLLNNGTEETKGSELTKKAFELLAADETINFVGNVEARELLNGVADVVVTDGFTGNAVLKSIEGTAMNMMSLLKTAILSEGVKGKMGALLLKNALHGMKDEMDYSKHGGAVLFGLKAPVIKTHGATGPDAVRYTIRQIHTMLETQVVPQLVEYYEGKAE.

The protein belongs to the PlsX family. In terms of assembly, homodimer. Probably interacts with PlsY.

The protein resides in the cytoplasm. It carries out the reaction a fatty acyl-[ACP] + phosphate = an acyl phosphate + holo-[ACP]. It functions in the pathway lipid metabolism; phospholipid metabolism. Its function is as follows. Catalyzes the reversible formation of acyl-phosphate (acyl-PO(4)) from acyl-[acyl-carrier-protein] (acyl-ACP). This enzyme utilizes acyl-ACP as fatty acyl donor, but not acyl-CoA. In Enterococcus faecalis (strain ATCC 700802 / V583), this protein is Phosphate acyltransferase.